The primary structure comprises 90 residues: Protein LIM3 (90 aa).

Positions 1–26 are cleaved as a signal peptide; that stretch reads MAAVKFLVCSVLLVVLATQSEIGLAQ. 4 cysteine pairs are disulfide-bonded: cysteine 28/cysteine 65, cysteine 38/cysteine 54, cysteine 55/cysteine 80, and cysteine 67/cysteine 87.

This sequence belongs to the A9/FIL1 family.

Its subcellular location is the secreted. The sequence is that of Protein LIM3 (LIM3) from Lilium longiflorum (Trumpet lily).